A 377-amino-acid polypeptide reads, in one-letter code: Pseudouridylate synthase RPUSD4, mitochondrial (377 aa).

The segment at 51-70 is disordered; the sequence is LRAQKQQQKTKEPAPTNPVQ. D153 is a catalytic residue.

Belongs to the pseudouridine synthase RluA family. As to quaternary structure, interacts with 16S mt-rRNA, mt-tRNA(Phe) and mt-tRNA(Met). Forms a regulatory protein-RNA complex, consisting of RCC1L, NGRN, RPUSD3, RPUSD4, TRUB2, FASTKD2 and 16S mt-rRNA.

The protein resides in the mitochondrion matrix. Its subcellular location is the nucleus. It is found in the cytoplasm. It carries out the reaction uridine in 5S rRNA = pseudouridine in 5S rRNA. It catalyses the reaction a uridine in tRNA = a pseudouridine in tRNA. The enzyme catalyses a uridine in mRNA = a pseudouridine in mRNA. In terms of biological role, catalyzes uridine to pseudouridine isomerization (pseudouridylation) of different mitochondrial RNA substrates. Acts on position 1397 in 16S mitochondrial ribosomal RNA (16S mt-rRNA). This modification is required for the assembly of 16S mt-rRNA into a functional mitochondrial ribosome. As a component of a functional protein-RNA module, consisting of RCC1L, NGRN, RPUSD3, RPUSD4, TRUB2, FASTKD2 and 16S mt-rRNA, controls 16S mt-rRNA abundance and is required for intra-mitochondrial translation. Acts on position 39 in mitochondrial tRNA(Phe). Also catalyzes pseudouridylation of mRNAs in nucleus: acts as a regulator of pre-mRNA splicing by mediating pseudouridylation of pre-mRNAs at locations associated with alternatively spliced regions. Pseudouridylation of pre-mRNAs near splice sites directly regulates mRNA splicing and mRNA 3'-end processing. The protein is Pseudouridylate synthase RPUSD4, mitochondrial of Bos taurus (Bovine).